A 474-amino-acid chain; its full sequence is MATNWGSLLQDKQQLEELARQAVDRALAEGVLLRTSQEPTSSEVVSYAPFTLFPSLVPSALLEQAYAVQMDFNLLVDAVSQNAAFLEQTLSSTIKQDDFTARLFDIHKQVLKEGIAQTVFLGLNRSDYMFQRSADGSPALKQIEINTISASFGGLASRTPAVHRHVLSVLSKTKEAGKILSNNPSKGLALGIAKAWELYGSPNALVLLIAQEKERNIFDQRAIENELLARNIHVIRRTFEDISEKGSLDQDRRLFVDGQEIAVVYFRDGYMPRQYSLQNWEARLLLERSHAAKCPDIATQLAGTKKVQQELSRPGMLEMLLPGQPEAVARLRATFAGLYSLDVGEEGDQAIAEALAAPSRFVLKPQREGGGNNLYGEEMVQALKQLKDSEERASYILMEKIEPEPFENCLLRPGSPARVVQCISELGIFGVYVRQEKTLVMNKHVGHLLRTKAIEHADGGVAAGVAVLDNPYPV.

An N-acetylalanine modification is found at Ala-2. Arg-125 contributes to the substrate binding site. Glu-144 is a binding site for ATP. The Mg(2+) site is built by Glu-144 and Asn-146. Substrate is bound by residues 148 to 151, 214 to 216, Gln-220, and 267 to 270; these read ISAS, ERN, and RDGY. ATP contacts are provided by residues Lys-305, 364–373, Tyr-375, and 398–401; these read KPQREGGGNN and MEKI. Position 368 (Glu-368) interacts with Mg(2+). Ser-415 carries the post-translational modification Phosphoserine. Residue Glu-425 participates in ATP binding. Residue Arg-450 participates in substrate binding. Positions 452 and 458 each coordinate ATP. 461 to 462 contributes to the substrate binding site; sequence VA.

It belongs to the eukaryotic GSH synthase family. As to quaternary structure, homodimer. Mg(2+) serves as cofactor.

The enzyme catalyses gamma-L-glutamyl-L-cysteine + glycine + ATP = glutathione + ADP + phosphate + H(+). The catalysed reaction is gamma-L-glutamyl-(2S)-2-aminobutanoate + glycine + ATP = ophthalmate + ADP + phosphate + H(+). It functions in the pathway sulfur metabolism; glutathione biosynthesis; glutathione from L-cysteine and L-glutamate: step 2/2. Functionally, catalyzes the production of glutathione from gamma-glutamylcysteine and glycine in an ATP-dependent manner. Glutathione (gamma-glutamylcysteinylglycine, GSH) is the most abundant intracellular thiol in living aerobic cells and is required for numerous processes including the protection of cells against oxidative damage, amino acid transport, the detoxification of foreign compounds, the maintenance of protein sulfhydryl groups in a reduced state and acts as a cofactor for a number of enzymes. Participates in ophthalmate biosynthesis in hepatocytes. In Homo sapiens (Human), this protein is Glutathione synthetase.